The primary structure comprises 202 residues: 3-isopropylmalate dehydratase small subunit (202 aa).

Belongs to the LeuD family. LeuD type 1 subfamily. Heterodimer of LeuC and LeuD.

The catalysed reaction is (2R,3S)-3-isopropylmalate = (2S)-2-isopropylmalate. It participates in amino-acid biosynthesis; L-leucine biosynthesis; L-leucine from 3-methyl-2-oxobutanoate: step 2/4. Its function is as follows. Catalyzes the isomerization between 2-isopropylmalate and 3-isopropylmalate, via the formation of 2-isopropylmaleate. The protein is 3-isopropylmalate dehydratase small subunit of Novosphingobium aromaticivorans (strain ATCC 700278 / DSM 12444 / CCUG 56034 / CIP 105152 / NBRC 16084 / F199).